Reading from the N-terminus, the 467-residue chain is Dimethylamine methyltransferase MtbB3 (467 aa).

Residue Pyl-356 is a non-standard amino acid, pyrrolysine.

The protein belongs to the dimethylamine methyltransferase family.

It catalyses the reaction Co(I)-[dimethylamine-specific corrinoid protein] + dimethylamine + H(+) = methyl-Co(III)-[dimethylamine-specific corrinoid protein] + methylamine. It functions in the pathway one-carbon metabolism; methanogenesis from dimethylamine. Functionally, catalyzes the transfer of a methyl group from dimethylamine to the corrinoid cofactor of MtbC. This chain is Dimethylamine methyltransferase MtbB3 (mtbB3), found in Methanosarcina mazei (strain ATCC BAA-159 / DSM 3647 / Goe1 / Go1 / JCM 11833 / OCM 88) (Methanosarcina frisia).